The following is a 471-amino-acid chain: A-type ATP synthase subunit B (471 aa).

This sequence belongs to the ATPase alpha/beta chains family. As to quaternary structure, has multiple subunits with at least A(3), B(3), C, D, E, F, H, I and proteolipid K(x).

It localises to the cell membrane. Its function is as follows. Component of the A-type ATP synthase that produces ATP from ADP in the presence of a proton gradient across the membrane. The B chain is a regulatory subunit. This Ignicoccus hospitalis (strain KIN4/I / DSM 18386 / JCM 14125) protein is A-type ATP synthase subunit B.